Consider the following 338-residue polypeptide: Anthranilate phosphoribosyltransferase (338 aa).

Residues glycine 81, 84–85 (GD), serine 89, 91–94 (NVST), 109–117 (KHGNRALSS), and alanine 121 contribute to the 5-phospho-alpha-D-ribose 1-diphosphate site. Glycine 81 serves as a coordination point for anthranilate. Mg(2+) is bound at residue serine 93. Residue asparagine 112 coordinates anthranilate. Arginine 167 contributes to the anthranilate binding site. The Mg(2+) site is built by aspartate 226 and glutamate 227.

It belongs to the anthranilate phosphoribosyltransferase family. As to quaternary structure, homodimer. Mg(2+) serves as cofactor.

It catalyses the reaction N-(5-phospho-beta-D-ribosyl)anthranilate + diphosphate = 5-phospho-alpha-D-ribose 1-diphosphate + anthranilate. It functions in the pathway amino-acid biosynthesis; L-tryptophan biosynthesis; L-tryptophan from chorismate: step 2/5. Catalyzes the transfer of the phosphoribosyl group of 5-phosphorylribose-1-pyrophosphate (PRPP) to anthranilate to yield N-(5'-phosphoribosyl)-anthranilate (PRA). This chain is Anthranilate phosphoribosyltransferase, found in Rhodopseudomonas palustris (strain HaA2).